The chain runs to 730 residues: Regulatory factor X 4 (730 aa).

The span at 30-41 (YSSHTSLGNISN) shows a compositional bias: polar residues. The tract at residues 30-59 (YSSHTSLGNISNDETDEEKENRASKPHSTP) is disordered. The RFX-type winged-helix DNA-binding region spans 61–136 (TLQWLGENYE…YHYYGIAVKE (76 aa)). The segment at 500-532 (EPAISTPSPVPFSPAASSSSVEIPSATSPVSNQ) is disordered. Low complexity predominate over residues 512–528 (SPAASSSSVEIPSATSP).

It belongs to the RFX family.

The protein resides in the nucleus. Its function is as follows. Required for neural tube ciliogenesis during embryogenesis. The sequence is that of Regulatory factor X 4 from Xenopus laevis (African clawed frog).